The chain runs to 823 residues: Lon protease (823 aa).

The Lon N-terminal domain occupies 22 to 217 (LPLLPVRDVV…KVNEHLNKEH (196 aa)). 369–376 (GPPGVGKT) contributes to the ATP binding site. The Lon proteolytic domain occupies 605–786 (KNEVGIVTGL…DDVLAVALET (182 aa)). Catalysis depends on residues serine 692 and lysine 735. The disordered stretch occupies residues 788–823 (PPPPPASEGKPAATVKAPPRRGIAAPRKGAMAGAKS).

The protein belongs to the peptidase S16 family. Homohexamer. Organized in a ring with a central cavity.

Its subcellular location is the cytoplasm. The catalysed reaction is Hydrolysis of proteins in presence of ATP.. In terms of biological role, ATP-dependent serine protease that mediates the selective degradation of mutant and abnormal proteins as well as certain short-lived regulatory proteins. Required for cellular homeostasis and for survival from DNA damage and developmental changes induced by stress. Degrades polypeptides processively to yield small peptide fragments that are 5 to 10 amino acids long. Binds to DNA in a double-stranded, site-specific manner. This is Lon protease from Geobacter metallireducens (strain ATCC 53774 / DSM 7210 / GS-15).